Consider the following 742-residue polypeptide: Vesicle-fusing ATPase (742 aa).

ATP contacts are provided by residues 499 to 504 (NGMVDC) and 539 to 546 (SGSGKTAL). T544 provides a ligand contact to Mg(2+).

This sequence belongs to the AAA ATPase family. As to quaternary structure, homohexamer. Binds to SNARE-SNAP complexes to form 20S particles. The cofactor is Mg(2+).

It localises to the cytoplasm. The enzyme catalyses ATP + H2O = ADP + phosphate + H(+). Its function is as follows. Required for vesicle-mediated transport. Catalyzes the fusion of transport vesicles within the Golgi cisternae. Is also required for transport from the endoplasmic reticulum to the Golgi stack. Seems to function as a fusion protein required for the delivery of cargo proteins to all compartments of the Golgi stack independent of vesicle origin. Required for maintaining the normal morphology of the Golgi apparatus. The polypeptide is Vesicle-fusing ATPase (Arabidopsis thaliana (Mouse-ear cress)).